A 319-amino-acid chain; its full sequence is Putative protein phosphatase 2C 23 (319 aa).

Positions 73-314 (AVRMESASCY…DDITVVVACI (242 aa)) constitute a PPM-type phosphatase domain. Positions 102, 235, and 305 each coordinate Mn(2+).

Belongs to the PP2C family. The cofactor is Mg(2+).

It catalyses the reaction O-phospho-L-seryl-[protein] + H2O = L-seryl-[protein] + phosphate. The enzyme catalyses O-phospho-L-threonyl-[protein] + H2O = L-threonyl-[protein] + phosphate. This chain is Putative protein phosphatase 2C 23, found in Oryza sativa subsp. japonica (Rice).